A 391-amino-acid polypeptide reads, in one-letter code: MYVRHLQVTDFRSWPHADLTFEPGPTVLVGSNGQGKTNLVEALGYVATLGSHRVATDAPLVRYGTQRAVVRAAVVNHGRELLVELEITPGKANRARINRGAAGKPRDVLGILRTVLFAPEDMAMVRGDPGERRRFLDDLLVARAPRYAGVRSDYDRVLRQRSALLKSAGAAKRGGSGGDLRTLEVWDGHLARYGAELLAGRLDLVAAIAPHVTSAYANVAATAEETAPSGRVADVRYRSSLGESLPEGYGVPRGEPADVEVLEKALLAELERVRAQELERGVSLVGPHRDDLELMLGELPAKGYASHGESWSFALALRLASYHLLAEDGAEPVLILDDVFAELDRRRRSRLAELVAGAEQVLVTAAVAEDVPEELTGVRFDVREGEVRRVE.

30-37 (GSNGQGKT) provides a ligand contact to ATP.

This sequence belongs to the RecF family.

It is found in the cytoplasm. Its function is as follows. The RecF protein is involved in DNA metabolism; it is required for DNA replication and normal SOS inducibility. RecF binds preferentially to single-stranded, linear DNA. It also seems to bind ATP. The polypeptide is DNA replication and repair protein RecF (Saccharopolyspora erythraea (strain ATCC 11635 / DSM 40517 / JCM 4748 / NBRC 13426 / NCIMB 8594 / NRRL 2338)).